Reading from the N-terminus, the 125-residue chain is Small ribosomal subunit protein uS13 (125 aa).

Residues 94 to 116 (GLPVRGQRTRTNARTRKGPRKAV) are compositionally biased toward basic residues. A disordered region spans residues 94 to 125 (GLPVRGQRTRTNARTRKGPRKAVRASSAKAGR).

This sequence belongs to the universal ribosomal protein uS13 family. In terms of assembly, part of the 30S ribosomal subunit. Forms a loose heterodimer with protein S19. Forms two bridges to the 50S subunit in the 70S ribosome.

Functionally, located at the top of the head of the 30S subunit, it contacts several helices of the 16S rRNA. In the 70S ribosome it contacts the 23S rRNA (bridge B1a) and protein L5 of the 50S subunit (bridge B1b), connecting the 2 subunits; these bridges are implicated in subunit movement. Contacts the tRNAs in the A and P-sites. The sequence is that of Small ribosomal subunit protein uS13 from Nitrosospira multiformis (strain ATCC 25196 / NCIMB 11849 / C 71).